A 442-amino-acid chain; its full sequence is Coiled-coil domain-containing protein 91 (442 aa).

The segment at 1–16 (MDDDDFGGFEAAETFD) is GGA1-binding motif. Residues 1–27 (MDDDDFGGFEAAETFDGEQGGNQAVSP) are disordered. Residues Ser-43 and Ser-46 each carry the phosphoserine modification. Disordered stretches follow at residues 48–80 (ELILDHDHSSPSTGHLPPDAVISSADDTHADSS) and 114–134 (HGALALEDEPEGPGVHVSNSQ). Coiled coils occupy residues 130 to 210 (VSNS…GHEA), 253 to 318 (HAQH…MKDV), and 346 to 408 (ARDQ…RRLD). The interval 211–414 (LSIIVDEYKA…RRLDQVTRQR (204 aa)) is homodimerization.

Homodimer. Interacts with GGA1, GGA2 and AP1G1.

The protein localises to the membrane. The protein resides in the golgi apparatus. Its subcellular location is the trans-Golgi network membrane. It localises to the trans-Golgi network. Functionally, involved in the regulation of membrane traffic through the trans-Golgi network (TGN). Functions in close cooperation with the GGAs in the sorting of hydrolases to lysosomes. The polypeptide is Coiled-coil domain-containing protein 91 (Ccdc91) (Mus musculus (Mouse)).